The chain runs to 602 residues: MQTFQADLAIVGAGGAGLRAAIAAAQANPNAKIALISKVYPMRSHTVAAEGGSAAVAQDHDSFEYHFHDTVAGGDWLCEQDVVDYFVHHCPTEMTQLELWGCPWSRRPDGSVNVRRFGGMKIERTWFAADKTGFHMLHTLFQTSLQFPQIQRFDEHFVLDILVDDGHVRGLVAMNMMEGTLVQIRANAVVMATGGAGRVYRYNTNGGIVTGDGMGMALSHGVPLRDMEFVQYHPTGLPGSGILMTEGCRGEGGILVNKNGYRYLQDYGMGPETPLGEPKNKYMELGPRDKVSQAFWHEWRKGNTISTPRGDVVYLDLRHLGEKKLHERLPFICELAKAYVGVDPVKEPIPVRPTAHYTMGGIETDQNCETRIKGLFAVGECSSVGLHGANRLGSNSLAELVVFGRLAGEQATERAATAGNGNEAAIEAQAAGVEQRLKDLVNQDGGENWAKIRDEMGLAMEEGCGIYRTPELMQKTIDKLAELQERFKRVRITDTSSVFNTDLLYTIELGHGLNVAECMAHSAMARKESRGAHQRLDEGCTERDDVNFLKHTLAFRDADGTTRLEYSDVKITTLPPAKRVYGGEADAADKAEAANKKEKANG.

FAD is bound by residues 12–16, 36–38, 44–52, 156–158, 192–193, and Asp212; these read GAGGA, ISK, SHTVAAEGG, HFV, and AT. His45 carries the post-translational modification Tele-8alpha-FAD histidine. Residues His233 and Arg249 contribute to the active site. FAD contacts are provided by residues 356–357, Glu380, and 391–397; these read HY and RLGSNSL. The disordered stretch occupies residues 581–602; the sequence is YGGEADAADKAEAANKKEKANG. The span at 587–602 shows a compositional bias: basic and acidic residues; it reads AADKAEAANKKEKANG.

Belongs to the FAD-dependent oxidoreductase 2 family. FRD/SDH subfamily. In terms of assembly, part of an enzyme complex containing four subunits: a flavoprotein (FrdA), an iron-sulfur protein (FrdB), and two hydrophobic anchor proteins (FrdC and FrdD). Can be cross-linked to SdhE. Purified from membrane fractions associated with protoporphyrinogen IX dehydrogenase (hemG). FAD serves as cofactor.

The protein resides in the cell inner membrane. The catalysed reaction is a quinone + succinate = fumarate + a quinol. The enzyme catalyses a menaquinone + succinate = a menaquinol + fumarate. Inhibited by oxaloacetate, a substrate analog. Its function is as follows. Two distinct, membrane-bound, FAD-containing enzymes are responsible for the catalysis of fumarate and succinate interconversion; fumarate reductase is used during anaerobic growth, and succinate dehydrogenase is used during aerobic growth. The QFR enzyme complex binds 2 quinones in or near the membrane; 1 near the [3Fe-4S] cluster (QP is proximal to the [3Fe-4S] cluster, on the cytoplasmic side of the membrane) while QD (the distal cluster) is on the other side of the membrane. It is not clear if both of the quinol-binding sites are functionally relevant. This is Fumarate reductase flavoprotein subunit (frdA) from Escherichia coli (strain K12).